A 333-amino-acid chain; its full sequence is Adenosine deaminase (333 aa).

Positions 12 and 14 each coordinate Zn(2+). Residues His14, Asp16, and Gly170 each coordinate substrate. His197 provides a ligand contact to Zn(2+). The active-site Proton donor is Glu200. Asp278 serves as a coordination point for Zn(2+). Asp279 serves as a coordination point for substrate.

It belongs to the metallo-dependent hydrolases superfamily. Adenosine and AMP deaminases family. Adenosine deaminase subfamily. It depends on Zn(2+) as a cofactor.

The enzyme catalyses adenosine + H2O + H(+) = inosine + NH4(+). It carries out the reaction 2'-deoxyadenosine + H2O + H(+) = 2'-deoxyinosine + NH4(+). Functionally, catalyzes the hydrolytic deamination of adenosine and 2-deoxyadenosine. The protein is Adenosine deaminase of Escherichia coli (strain SMS-3-5 / SECEC).